Here is a 158-residue protein sequence, read N- to C-terminus: Sec-independent protein translocase protein TatB (158 aa).

Residues 2-22 traverse the membrane as a helical segment; it reads FDGIGFMELLLIGVLGLVVLG. Residues 86–158 form a disordered region; sequence LKQAAQSVNR…DTSSNPKANG (73 aa). 3 stretches are compositionally biased toward polar residues: residues 88 to 107, 113 to 136, and 143 to 158; these read QAAQ…SQGT, QIHS…QHLT, and EPSQ…KANG.

Belongs to the TatB family. As to quaternary structure, the Tat system comprises two distinct complexes: a TatABC complex, containing multiple copies of TatA, TatB and TatC subunits, and a separate TatA complex, containing only TatA subunits. Substrates initially bind to the TatABC complex, which probably triggers association of the separate TatA complex to form the active translocon.

The protein localises to the cell inner membrane. Its function is as follows. Part of the twin-arginine translocation (Tat) system that transports large folded proteins containing a characteristic twin-arginine motif in their signal peptide across membranes. Together with TatC, TatB is part of a receptor directly interacting with Tat signal peptides. TatB may form an oligomeric binding site that transiently accommodates folded Tat precursor proteins before their translocation. This chain is Sec-independent protein translocase protein TatB, found in Shewanella putrefaciens (strain CN-32 / ATCC BAA-453).